The sequence spans 467 residues: 3-isopropylmalate dehydratase large subunit (467 aa).

Residues Cys347, Cys407, and Cys410 each contribute to the [4Fe-4S] cluster site.

Belongs to the aconitase/IPM isomerase family. LeuC type 1 subfamily. In terms of assembly, heterodimer of LeuC and LeuD. [4Fe-4S] cluster is required as a cofactor.

The enzyme catalyses (2R,3S)-3-isopropylmalate = (2S)-2-isopropylmalate. It participates in amino-acid biosynthesis; L-leucine biosynthesis; L-leucine from 3-methyl-2-oxobutanoate: step 2/4. Functionally, catalyzes the isomerization between 2-isopropylmalate and 3-isopropylmalate, via the formation of 2-isopropylmaleate. The protein is 3-isopropylmalate dehydratase large subunit of Trichormus variabilis (strain ATCC 29413 / PCC 7937) (Anabaena variabilis).